The sequence spans 236 residues: Probable fimbrial chaperone EcpE (236 aa).

An N-terminal signal peptide occupies residues 1–27; sequence MFRRRGVTLTKALLTAVCMLAAPLTQA.

The protein belongs to the EcpB/EcpE family.

Functionally, part of the ecpRABCDE operon, which encodes the E.coli common pilus (ECP). ECP is found in both commensal and pathogenic strains and plays a dual role in early-stage biofilm development and host cell recognition. This chain is Probable fimbrial chaperone EcpE (ecpE), found in Escherichia coli (strain K12).